A 95-amino-acid chain; its full sequence is MTLFSSISSISNPMTSSKSSIASFGSGTSMSSNSIACGGGCGGGSGGILGLGLGLGLNLFGGSGSRGACGGNGRSGNPAQGGNGGSCCGGPCCGI.

A disordered region spans residues Met1–Ser31.

It belongs to the hssA/B family.

The chain is HssA/B-like protein 45 (hssl45) from Dictyostelium discoideum (Social amoeba).